A 205-amino-acid polypeptide reads, in one-letter code: Holliday junction branch migration complex subunit RuvA (205 aa).

Positions 1–64 (MIGRLRGLLV…EDAQLLYGFI (64 aa)) are domain I. The domain II stretch occupies residues 65 to 143 (TKQERALFRL…SLMEASAGSE (79 aa)). Positions 144-156 (REFMLKSNYTPAP) are flexible linker. Residues 157-205 (VINTAEEDAIAALLSLGYKPAQASKAVSAVYQDGMDSETLIKSSLKSML) are domain III.

This sequence belongs to the RuvA family. In terms of assembly, homotetramer. Forms an RuvA(8)-RuvB(12)-Holliday junction (HJ) complex. HJ DNA is sandwiched between 2 RuvA tetramers; dsDNA enters through RuvA and exits via RuvB. An RuvB hexamer assembles on each DNA strand where it exits the tetramer. Each RuvB hexamer is contacted by two RuvA subunits (via domain III) on 2 adjacent RuvB subunits; this complex drives branch migration. In the full resolvosome a probable DNA-RuvA(4)-RuvB(12)-RuvC(2) complex forms which resolves the HJ.

It localises to the cytoplasm. Its function is as follows. The RuvA-RuvB-RuvC complex processes Holliday junction (HJ) DNA during genetic recombination and DNA repair, while the RuvA-RuvB complex plays an important role in the rescue of blocked DNA replication forks via replication fork reversal (RFR). RuvA specifically binds to HJ cruciform DNA, conferring on it an open structure. The RuvB hexamer acts as an ATP-dependent pump, pulling dsDNA into and through the RuvAB complex. HJ branch migration allows RuvC to scan DNA until it finds its consensus sequence, where it cleaves and resolves the cruciform DNA. The protein is Holliday junction branch migration complex subunit RuvA of Shewanella sediminis (strain HAW-EB3).